Consider the following 172-residue polypeptide: HAD-like hydrolase superfamily protein P8B7.31 (172 aa).

Catalysis depends on D14, which acts as the Nucleophile. Residues D14, D16, and D137 each contribute to the Mg(2+) site. The active-site Proton donor is the D16.

The protein belongs to the HAD-like hydrolase superfamily.

Its subcellular location is the cytoplasm. The protein resides in the nucleus. In Schizosaccharomyces pombe (strain 972 / ATCC 24843) (Fission yeast), this protein is HAD-like hydrolase superfamily protein P8B7.31.